Here is a 178-residue protein sequence, read N- to C-terminus: CDP-archaeol synthase (178 aa).

5 helical membrane passes run 3–23, 56–76, 91–111, 123–143, and 149–169; these read LLLL…ANAV, FFGI…VILY, IILG…GSFI, APLL…YPLY, and LMVI…IIAY.

Belongs to the CDP-archaeol synthase family. The cofactor is Mg(2+).

The protein localises to the cell membrane. It catalyses the reaction 2,3-bis-O-(geranylgeranyl)-sn-glycerol 1-phosphate + CTP + H(+) = CDP-2,3-bis-O-(geranylgeranyl)-sn-glycerol + diphosphate. The protein operates within membrane lipid metabolism; glycerophospholipid metabolism. Functionally, catalyzes the formation of CDP-2,3-bis-(O-geranylgeranyl)-sn-glycerol (CDP-archaeol) from 2,3-bis-(O-geranylgeranyl)-sn-glycerol 1-phosphate (DGGGP) and CTP. This reaction is the third ether-bond-formation step in the biosynthesis of archaeal membrane lipids. The polypeptide is CDP-archaeol synthase (Methanococcus maripaludis (strain C7 / ATCC BAA-1331)).